Here is an 86-residue protein sequence, read N- to C-terminus: RNA-binding protein Hfq (86 aa).

Residues 9–68 (DIFLNVLRRERIQVSIYLFNGIKLQGHIESFDQFVIVLKNTISQMVYKHAVSTIVPSKFV) enclose the Sm domain.

This sequence belongs to the Hfq family. As to quaternary structure, homohexamer.

Functionally, RNA chaperone that binds small regulatory RNA (sRNAs) and mRNAs to facilitate mRNA translational regulation in response to envelope stress, environmental stress and changes in metabolite concentrations. Also binds with high specificity to tRNAs. The polypeptide is RNA-binding protein Hfq (Baumannia cicadellinicola subsp. Homalodisca coagulata).